Here is a 1009-residue protein sequence, read N- to C-terminus: DNA ligase 4 (1009 aa).

Disordered regions lie at residues 1–34 (METDQDMHDQAMAGEETDLDEKYPNRPQNKAPTL) and 51–72 (KKKPVGPAGNRRKAGPHGLSAA). The segment covering 51–65 (KKKPVGPAGNRRKAG) has biased composition (basic residues). ATP-binding residues include Glu315, Lys317, Leu318, Arg322, Glu384, Phe424, Glu484, Lys489, Lys506, and Lys508. The N6-AMP-lysine intermediate role is filled by Lys317. Glu384 lines the Mg(2+) pocket. Glu484 contacts Mg(2+). 2 consecutive BRCT domains span residues 715–808 (PSGH…PDLL) and 887–995 (PCGW…QHMP).

Belongs to the ATP-dependent DNA ligase family. Requires Mg(2+) as cofactor.

The protein resides in the nucleus. It catalyses the reaction ATP + (deoxyribonucleotide)n-3'-hydroxyl + 5'-phospho-(deoxyribonucleotide)m = (deoxyribonucleotide)n+m + AMP + diphosphate.. DNA ligase involved in DNA non-homologous end joining (NHEJ); required for double-strand break (DSB) repair. This Emericella nidulans (strain FGSC A4 / ATCC 38163 / CBS 112.46 / NRRL 194 / M139) (Aspergillus nidulans) protein is DNA ligase 4 (lig4).